The sequence spans 129 residues: Iron-sulfur cluster assembly 1 homolog, mitochondrial (129 aa).

The N-terminal 12 residues, 1–12 (MSASLVRATVRA), are a transit peptide targeting the mitochondrion. Fe cation is bound by residues Cys57, Cys121, and Cys123.

This sequence belongs to the HesB/IscA family. In terms of assembly, interacts with CRY2, but not with CRY1 (in vitro).

The protein resides in the mitochondrion. Functionally, involved in the maturation of mitochondrial 4Fe-4S proteins functioning late in the iron-sulfur cluster assembly pathway. Probably involved in the binding of an intermediate of Fe/S cluster assembly. The protein is Iron-sulfur cluster assembly 1 homolog, mitochondrial (Isca1) of Mus musculus (Mouse).